A 216-amino-acid polypeptide reads, in one-letter code: Small ribosomal subunit protein uS3c (216 aa).

Residues 43–115 (FENDWGTLYN…QTRIKVIQVN (73 aa)) enclose the KH type-2 domain.

This sequence belongs to the universal ribosomal protein uS3 family. Part of the 30S ribosomal subunit.

The protein resides in the plastid. It is found in the chloroplast. In Emiliania huxleyi (Coccolithophore), this protein is Small ribosomal subunit protein uS3c (rps3).